A 358-amino-acid chain; its full sequence is Chitin synthase export chaperone (358 aa).

Helical transmembrane passes span 49-69, 88-108, 117-137, 159-179, 185-205, 220-240, and 250-270; these read IIFQ…TVVM, FFYL…GVIP, FVAV…INGF, FVAF…WAGL, VGIF…YVVM, LGDI…LYAF, and HYLD…MMVY. The interval 321 to 358 is disordered; it reads ASGPGTGSGASASGYEGGHHRRESHGYTPSPNRQSLRY. Positions 347–358 are enriched in polar residues; it reads YTPSPNRQSLRY.

It belongs to the CHS7 family. In terms of assembly, interacts with chs-3.

The protein resides in the endoplasmic reticulum membrane. Its function is as follows. Chaperone required for the export of the chitin synthase chs-3 from the endoplasmic reticulum. The polypeptide is Chitin synthase export chaperone (csc-1) (Neurospora crassa (strain ATCC 24698 / 74-OR23-1A / CBS 708.71 / DSM 1257 / FGSC 987)).